Here is a 612-residue protein sequence, read N- to C-terminus: Netrin unc-6 (612 aa).

Positions 1 to 21 (MITSVLRYVLALYFCMGIAHG) are cleaved as a signal peptide. The region spanning 43–290 (RPVRCVPEFI…SMGELAVGGR (248 aa)) is the Laminin N-terminal domain. Asn114, Asn128, and Asn268 each carry an N-linked (GlcNAc...) asparagine glycan. Cysteines 117 and 149 form a disulfide. Cystine bridges form between Cys291/Cys300, Cys293/Cys310, Cys312/Cys321, Cys324/Cys344, Cys347/Cys356, Cys349/Cys374, Cys377/Cys386, Cys389/Cys407, Cys410/Cys422, Cys412/Cys429, Cys431/Cys440, Cys443/Cys457, Cys478/Cys547, and Cys494/Cys604. Laminin EGF-like domains are found at residues 291 to 346 (CKCN…SCVA), 347 to 409 (CNCN…ACKS), and 410 to 459 (CGCH…PCIK). Asn368 carries an N-linked (GlcNAc...) asparagine glycan. The N-linked (GlcNAc...) asparagine glycan is linked to Asn423. An NTR domain is found at 478 to 604 (CSKCRIVPKR…FSKKDKLGQC (127 aa)). N-linked (GlcNAc...) asparagine glycosylation is present at Asn564.

As to quaternary structure, binds to unc-5 and unc-40 receptors.

Its subcellular location is the secreted. It is found in the extracellular space. The protein resides in the extracellular matrix. It localises to the basement membrane. Component of an extracellular matrix cue that guides dorsoventral migrations on the epidermis. Required for the guidance of pioneer axons and migrating cells along the body wall. In particular, it is required for the guidance of axons from neurons, including SubL neurons and AIY interneurons, into the nerve ring. During gonad morphogenesis, involved in distal tip cell (DTC) migration from the dorsal side of the hermaphrodite body to the midbody to allow for formation of gonad arms. Its association with either unc-40 or unc-5 receptors will lead to axon attraction or repulsion, respectively. Involved in dendritic morphogenesis; may act by association with unc-40 at the tips of growing dendrites for interaction with unc-5 on the apposing branch to induce mutual repulsion. Involved in the positioning of ray 1, the most anterior ray sensilium, in the male tail. Required for the formation of synapses between the AVA interneurons and the PHB sensory neurons. This is Netrin unc-6 from Caenorhabditis elegans.